Consider the following 1035-residue polypeptide: Translation initiation factor IF-2 (1035 aa).

Residues 56-66 (KDDKSNTDDNK) show a composition bias toward basic and acidic residues. Disordered stretches follow at residues 56-80 (KDDK…SSEA) and 114-402 (ANDA…VIKN). Polar residues predominate over residues 68–78 (ASAHSVAQHSS). 2 stretches are compositionally biased toward basic and acidic residues: residues 114–137 (ANDA…RVET) and 146–200 (LVRE…EIKD). Residues 219–228 (DSATNVNLNE) are compositionally biased toward polar residues. Positions 229–238 (SIDKDKKTND) are enriched in basic and acidic residues. The segment covering 239-253 (NRQVSTDNSAVNNEE) has biased composition (polar residues). Residues 259-315 (LNKKDMDKKNNNKKNEAKKNAEKKNEAKKNEKNDNKGGNAKKNEHRSPDMKKNDSNR) are compositionally biased toward basic and acidic residues. Over residues 316–325 (PQDANKQNSK) the composition is skewed to polar residues. Composition is skewed to basic and acidic residues over residues 327 to 347 (AADK…EIPK) and 354 to 385 (QKEE…KEQP). The tr-type G domain occupies 537-706 (PRPPVVVVMG…LLAADMLELK (170 aa)). The tract at residues 546-553 (GHVDHGKT) is G1. Position 546-553 (546-553 (GHVDHGKT)) interacts with GTP. A G2 region spans residues 571–575 (GITQH). The tract at residues 592 to 595 (DTPG) is G3. GTP contacts are provided by residues 592-596 (DTPGH) and 646-649 (NKID). Residues 646-649 (NKID) are G4. The G5 stretch occupies residues 682–684 (SAK).

It belongs to the TRAFAC class translation factor GTPase superfamily. Classic translation factor GTPase family. IF-2 subfamily.

It is found in the cytoplasm. Functionally, one of the essential components for the initiation of protein synthesis. Protects formylmethionyl-tRNA from spontaneous hydrolysis and promotes its binding to the 30S ribosomal subunits. Also involved in the hydrolysis of GTP during the formation of the 70S ribosomal complex. This is Translation initiation factor IF-2 from Acetivibrio thermocellus (strain ATCC 27405 / DSM 1237 / JCM 9322 / NBRC 103400 / NCIMB 10682 / NRRL B-4536 / VPI 7372) (Clostridium thermocellum).